The primary structure comprises 500 residues: Vitamin D(3) 25-hydroxylase (500 aa).

Cys446 provides a ligand contact to heme.

It belongs to the cytochrome P450 family. The cofactor is heme. As to expression, found in liver and kidney.

It localises to the endoplasmic reticulum membrane. Its subcellular location is the microsome membrane. It carries out the reaction calciol + reduced [NADPH--hemoprotein reductase] + O2 = calcidiol + oxidized [NADPH--hemoprotein reductase] + H2O + H(+). The catalysed reaction is alfacalcidol + reduced [NADPH--hemoprotein reductase] + O2 = calcitriol + oxidized [NADPH--hemoprotein reductase] + H2O + H(+). It catalyses the reaction dodecanoate + reduced [NADPH--hemoprotein reductase] + O2 = 12-hydroxydodecanoate + oxidized [NADPH--hemoprotein reductase] + H2O + H(+). The enzyme catalyses dodecanoate + reduced [NADPH--hemoprotein reductase] + O2 = 11-hydroxydodecanoate + oxidized [NADPH--hemoprotein reductase] + H2O + H(+). It carries out the reaction 5beta-cholestane-3alpha,7alpha-diol + reduced [NADPH--hemoprotein reductase] + O2 = 5beta-cholestane-3alpha,7alpha,25-triol + oxidized [NADPH--hemoprotein reductase] + H2O + H(+). The catalysed reaction is 5beta-cholestane-3alpha,7alpha,12alpha-triol + reduced [NADPH--hemoprotein reductase] + O2 = 5beta-cholestane-3alpha,7alpha,12alpha,25-tetrol + oxidized [NADPH--hemoprotein reductase] + H2O + H(+). Catalyzes the 25-hydroxylation of vitamin D(3) (calciol), 1alpha-hydroxyvitamin D(3) (alphacalcidiol) and some C27 steroids. In addition the enzyme catalyzes the hydroxylation of positions 11 and 12 of dodecanoate. The protein is Vitamin D(3) 25-hydroxylase (CYP2D25) of Sus scrofa (Pig).